A 253-amino-acid polypeptide reads, in one-letter code: Adapter protein MecA (253 aa).

This sequence belongs to the MecA family. In terms of assembly, homodimer.

In terms of biological role, enables the recognition and targeting of unfolded and aggregated proteins to the ClpC protease or to other proteins involved in proteolysis. The polypeptide is Adapter protein MecA (Streptococcus pyogenes serotype M6 (strain ATCC BAA-946 / MGAS10394)).